The sequence spans 360 residues: Actin-like protein MamK (360 aa).

ATP-binding positions include Lys22, 33–34 (TS), and Asp89. Residue Glu156 coordinates Mg(2+). Residues 177 to 179 (AGT), 231 to 235 (KEQFS), and Gly302 each bind ATP.

This sequence belongs to the FtsA/MreB family. MamK subfamily. Forms cytoplasmic filaments. Interacts with MamJ. Forms filaments in the absence of other magnetosome proteins and in E.coli. Filament formation in vitro requires ATP, GTP or a non-hydrolyzable ATP analog.

It is found in the cytoplasm. The protein resides in the cytoskeleton. It carries out the reaction ATP + H2O = ADP + phosphate + H(+). Filament dynamics depend partially on MamJ. Its function is as follows. Protein with ATPase activity which forms dynamic cytoplasmic filaments that are involved in sorting, concatenating and/or correctly positioning of magnetosomes in the cell. Not absolutely necessary for assembly of short chains. Filaments grow from the both cell poles towards midcell, and are probably disassembled at the other end of the cell, a process known as treadmilling. Polymerizes in the presence of ATP, GTP or a non-hydrolyzable ATP analog. Required for correct segregation and positioning of magnetosomes following cell division. The sequence is that of Actin-like protein MamK from Magnetospirillum gryphiswaldense (strain DSM 6361 / JCM 21280 / NBRC 15271 / MSR-1).